The following is a 131-amino-acid chain: Small ribosomal subunit protein uS8 (131 aa).

The protein belongs to the universal ribosomal protein uS8 family. As to quaternary structure, part of the 30S ribosomal subunit. Contacts proteins S5 and S12.

One of the primary rRNA binding proteins, it binds directly to 16S rRNA central domain where it helps coordinate assembly of the platform of the 30S subunit. This Neorickettsia sennetsu (strain ATCC VR-367 / Miyayama) (Ehrlichia sennetsu) protein is Small ribosomal subunit protein uS8.